A 447-amino-acid polypeptide reads, in one-letter code: Argininosuccinate synthase (447 aa).

Residues 12 to 20 and Ala-39 each bind ATP; that span reads AYSGGLDTS. Residues Tyr-92 and Ser-97 each contribute to the L-citrulline site. Gly-122 contributes to the ATP binding site. Residues Thr-124, Asn-128, and Asp-129 each contribute to the L-aspartate site. Asn-128 provides a ligand contact to L-citrulline. Residues Arg-132, Ser-182, Ser-191, Glu-267, and Tyr-279 each contribute to the L-citrulline site.

The protein belongs to the argininosuccinate synthase family. Type 1 subfamily. Homotetramer.

The protein resides in the cytoplasm. It catalyses the reaction L-citrulline + L-aspartate + ATP = 2-(N(omega)-L-arginino)succinate + AMP + diphosphate + H(+). Its pathway is amino-acid biosynthesis; L-arginine biosynthesis; L-arginine from L-ornithine and carbamoyl phosphate: step 2/3. The sequence is that of Argininosuccinate synthase from Sulfurovum sp. (strain NBC37-1).